A 647-amino-acid polypeptide reads, in one-letter code: RAF proto-oncogene serine/threonine-protein kinase (647 aa).

Ser-43 carries the phosphoserine modification. The 76-residue stretch at 56–131 folds into the RBD domain; sequence NTIRVFLPNK…IGEELQVDFL (76 aa). A Phorbol-ester/DAG-type zinc finger spans residues 138 to 184; the sequence is THNFARKTFLKLAFCDICQKFLLNGFRCQTCGYKFHEHCSTKVPTMC. Disordered stretches follow at residues 236–269 and 284–334; these read HVFT…VSTT and HSES…RPRG. The span at 239–269 shows a compositional bias: polar residues; it reads TFNTSNPSSEGTLSQRQRSTSTPNVHMVSTT. Ser-259 bears the Phosphoserine mark. Phosphothreonine; by autocatalysis is present on Thr-268. Residues 286 to 297 show a composition bias toward low complexity; it reads ESASPSALSGSP. The segment covering 298-309 has biased composition (polar residues); the sequence is NNMSPTGWSQPK. Ser-338 carries the post-translational modification Phosphoserine. The 261-residue stretch at 349–609 folds into the Protein kinase domain; it reads VMLSTRIGSG…PQILSSIELL (261 aa). ATP is bound by residues 355 to 363 and Lys-375; that span reads IGSGSFGTV. The active-site Proton acceptor is Asp-468. Ser-499 and Ser-621 each carry phosphoserine.

Belongs to the protein kinase superfamily. TKL Ser/Thr protein kinase family. RAF subfamily. In terms of processing, phosphorylation at Ser-259 inactivates kinase activity. Dephosphorylation of Ser-259 by a complex containing protein phosphatase 1 relieves inactivation, leading to stimulate RAF1 activity. Isoform 1 was present in all tissues tested: skeletal muscle, intestine, brain, gizzard, heart, lung, kidney, bone marrow, spleen and bursa of Fabricius. Isoform 2 was only detected in brain, heart and skeletal muscle. In brain and heart isoform 1 is more abundant than isoform 2. In skeletal muscle isoform 2 is more abundant than isoform 1.

It localises to the cytoplasm. The protein localises to the cell membrane. It carries out the reaction L-seryl-[protein] + ATP = O-phospho-L-seryl-[protein] + ADP + H(+). The catalysed reaction is L-threonyl-[protein] + ATP = O-phospho-L-threonyl-[protein] + ADP + H(+). Serine/threonine-protein kinase that acts as a regulatory link between the membrane-associated Ras GTPases and the MAPK/ERK cascade, and this critical regulatory link functions as a switch determining cell fate decisions. RAF1 activation initiates a mitogen-activated protein kinase (MAPK) cascade that comprises a sequential phosphorylation of the dual-specific MAPK kinases (MAP2K1/MEK1 and MAP2K2/MEK2) and the extracellular signal-regulated kinases (MAPK3/ERK1 and MAPK1/ERK2). This Gallus gallus (Chicken) protein is RAF proto-oncogene serine/threonine-protein kinase (RAF1).